The sequence spans 196 residues: Pyridoxal 5'-phosphate synthase subunit PdxT (196 aa).

47 to 49 is an L-glutamine binding site; the sequence is GES. The active-site Nucleophile is C79. L-glutamine contacts are provided by residues R106 and 134-135; that span reads IR. Catalysis depends on charge relay system residues H170 and E172.

It belongs to the glutaminase PdxT/SNO family. In the presence of PdxS, forms a dodecamer of heterodimers. Only shows activity in the heterodimer.

The catalysed reaction is aldehydo-D-ribose 5-phosphate + D-glyceraldehyde 3-phosphate + L-glutamine = pyridoxal 5'-phosphate + L-glutamate + phosphate + 3 H2O + H(+). It carries out the reaction L-glutamine + H2O = L-glutamate + NH4(+). Its pathway is cofactor biosynthesis; pyridoxal 5'-phosphate biosynthesis. Functionally, catalyzes the hydrolysis of glutamine to glutamate and ammonia as part of the biosynthesis of pyridoxal 5'-phosphate. The resulting ammonia molecule is channeled to the active site of PdxS. The sequence is that of Pyridoxal 5'-phosphate synthase subunit PdxT from Bacillus pumilus (strain SAFR-032).